The following is a 414-amino-acid chain: Esterase FrsA (414 aa).

The protein belongs to the FrsA family.

It carries out the reaction a carboxylic ester + H2O = an alcohol + a carboxylate + H(+). Catalyzes the hydrolysis of esters. This Escherichia coli O7:K1 (strain IAI39 / ExPEC) protein is Esterase FrsA.